The primary structure comprises 199 residues: MSVETERSSTESSAASGLDFEDTALTLRLPGSLAAAAAPDPDRKRSSPSSSDAADAADNSSPLAAAADAPPAPKARVVGWPPVRSFRKNALAAKFVKVAVDGAPYLRKVDLEAYSGYDQLLRALQDKFFSHFTIRKFADDERKLVDAVNGTEYVPTYEDKDGDWMLVGDVPWKMFVETCQRLRLMKSSEAVNLAPRAAQ.

An EAR-like (transcriptional repression) motif is present at residues 25–29; the sequence is LTLRL. The disordered stretch occupies residues 31 to 74; that stretch reads GSLAAAAAPDPDRKRSSPSSSDAADAADNSSPLAAAADAPPAPK. Residues 47 to 69 show a composition bias toward low complexity; sequence SPSSSDAADAADNSSPLAAAADA. The PB1 domain maps to 93 to 187; it reads AKFVKVAVDG…TCQRLRLMKS (95 aa).

This sequence belongs to the Aux/IAA family. In terms of assembly, homodimers and heterodimers. As to expression, highly expressed in flowers. Expressed at low levels in roots and shoots.

It is found in the nucleus. Aux/IAA proteins are short-lived transcriptional factors that function as repressors of early auxin response genes at low auxin concentrations. The chain is Auxin-responsive protein IAA1 (IAA1) from Oryza sativa subsp. japonica (Rice).